The sequence spans 178 residues: Neuroblastoma suppressor of tumorigenicity 1 (178 aa).

The N-terminal stretch at 1–16 (MLWVLVGTVLPVMLLA) is a signal peptide. 5 cysteine pairs are disulfide-bonded: Cys-34–Cys-84, Cys-48–Cys-98, Cys-58–Cys-117, Cys-62–Cys-119, and Cys-81–Cys-122. Residues 34-123 (CEAKNITQIV…IVHCSCQACG (90 aa)) form the CTCK domain. Positions 130–178 (GLNVYMQGEDGPGSQPGSHSHSHPHPGCQTPEPEEPPGAPQVEEEGAED) are disordered.

Belongs to the DAN family. As to quaternary structure, homodimer. In terms of tissue distribution, most abundant in lung, brain, intestine and kidney.

The protein localises to the secreted. Its function is as follows. Possible candidate as a tumor suppressor gene of neuroblastoma. May play an important role in preventing cells from entering the final stage (G1/S) of the transformation process. This Rattus norvegicus (Rat) protein is Neuroblastoma suppressor of tumorigenicity 1 (Nbl1).